We begin with the raw amino-acid sequence, 352 residues long: MVFRIASSPYTHNQRQTSRIMLLVLLAAVPGIAAQLWFFGWGTLVQILLASVSALLAEALVLKLRKQSVAATLKDNSALLTGLLLAVSIPPLAPWWMVVLGTVFAVIIAKQLYGGLGQNPFNPAMIGYVVLLISFPVQMTSWLPPHEIAVNIPGFIDAIQVIFSGHTASGGDMNTLRLGIDGISQATPLDTFKTSVRAGHSVEQIMQYPIYSGILAGAGWQWVNLAWLAGGVWLLWQKAIRWHIPLSFLVTLALCAMLGWLFSPETLAAPQIHLLSGATMLGAFFILTDPVTASTTNRGRLIFGALAGLLVWLIRSFGGYPDGVAFAVLLANITVPLIDYYTRPRVYGHRKG.

5 helical membrane passes run 20-40 (IMLL…WFFG), 42-62 (GTLV…ALVL), 78-109 (ALLT…VIIA), 123-143 (PAMI…TSWL), and 148-168 (IAVN…GHTA). Position 187 is an FMN phosphoryl threonine (Thr-187). The next 5 helical transmembrane spans lie at 214-234 (ILAG…GVWL), 242-262 (WHIP…GWLF), 267-287 (LAAP…FFIL), 301-321 (LIFG…GGYP), and 322-342 (DGVA…DYYT).

Belongs to the NqrB/RnfD family. The complex is composed of six subunits: RsxA, RsxB, RsxC, RsxD, RsxE and RsxG. FMN serves as cofactor.

Its subcellular location is the cell inner membrane. Functionally, part of a membrane-bound complex that couples electron transfer with translocation of ions across the membrane. Required to maintain the reduced state of SoxR. Probably transfers electron from NAD(P)H to SoxR. This Escherichia coli (strain K12) protein is Ion-translocating oxidoreductase complex subunit D.